The sequence spans 986 residues: Translation initiation factor IF-2 (986 aa).

The segment covering 49-59 has biased composition (basic and acidic residues); that stretch reads EFAKDNAKGDS. The interval 49 to 370 is disordered; it reads EFAKDNAKGD…KNRLAKRHEY (322 aa). The span at 60-112 shows a compositional bias: low complexity; the sequence is KPASSAQKPAAKPVQQRRPAAPSAPASTSSSAPTPAAPARQASPASAHQQAPT. Basic and acidic residues predominate over residues 135–168; it reads GQHDNRENGRDNREGRENGRQSRPNDRRNNDRRN. Over residues 170 to 182 the composition is skewed to low complexity; sequence QGRPNNGQPGQHQ. 2 stretches are compositionally biased toward gly residues: residues 254–286 and 296–353; these read GRGGRPGRPGQGQGQGRGFRGGRPGQGGQGGPR and GQGG…GRQG. Over residues 357–366 the composition is skewed to basic residues; sequence SKARKNRLAK. Positions 479-651 constitute a tr-type G domain; that stretch reads PRPPVVTVMG…VLLTADAELD (173 aa). The segment at 488–495 is G1; the sequence is GHVDHGKT. Residue 488-495 participates in GTP binding; it reads GHVDHGKT. Positions 513–517 are G2; sequence GITQR. The interval 538–541 is G3; sequence DTPG. GTP is bound by residues 538-542 and 592-595; these read DTPGH and NKID. Residues 592 to 595 form a G4 region; the sequence is NKID. Residues 628–630 form a G5 region; that stretch reads SAK.

It belongs to the TRAFAC class translation factor GTPase superfamily. Classic translation factor GTPase family. IF-2 subfamily.

The protein resides in the cytoplasm. Functionally, one of the essential components for the initiation of protein synthesis. Protects formylmethionyl-tRNA from spontaneous hydrolysis and promotes its binding to the 30S ribosomal subunits. Also involved in the hydrolysis of GTP during the formation of the 70S ribosomal complex. The protein is Translation initiation factor IF-2 of Bifidobacterium longum subsp. infantis (strain ATCC 15697 / DSM 20088 / JCM 1222 / NCTC 11817 / S12).